The primary structure comprises 215 residues: Large ribosomal subunit protein uL1 (215 aa).

It belongs to the universal ribosomal protein uL1 family. Part of the 50S ribosomal subunit.

Binds directly to 23S rRNA. Probably involved in E site tRNA release. In terms of biological role, protein L1 is also a translational repressor protein, it controls the translation of its operon by binding to its mRNA. The protein is Large ribosomal subunit protein uL1 of Cenarchaeum symbiosum (strain A).